A 298-amino-acid chain; its full sequence is Protease HtpX homolog (298 aa).

Transmembrane regions (helical) follow at residues 5–25 (IFLF…VLSV) and 45–65 (MALL…SLAI). Residue His-155 participates in Zn(2+) binding. The active site involves Glu-156. Position 159 (His-159) interacts with Zn(2+). Transmembrane regions (helical) follow at residues 170 to 190 (LLQG…AWIA) and 204 to 224 (FIAM…VVFA). Glu-230 contacts Zn(2+).

This sequence belongs to the peptidase M48B family. Requires Zn(2+) as cofactor.

It localises to the cell membrane. In Bacillus subtilis (strain 168), this protein is Protease HtpX homolog.